The sequence spans 553 residues: MDYSGVYPSSSKVYVRGNLYSDVNVGMRKVAIKNGTSEFLVYDTGGPYTDREAKLDIKSGIRKLRSTWIENRRDTSPVQRSFVPSGSSCTRYQKAAENVLRKIAGGSPVTQLFYAQNGIITPEMEYVAIRENALRMQVGSSETGAAAHQEITPEFVRQEIAAGRAIIPANINHPESEPMVIGRNFLVKINANIGNSAVLSGIEEEVKKMALAVAYGADTVMDLSTGSDIHNIREWIIRNSPVPIGTVPIYQALNKVKGVVENLSFEVFKETIIEQAEQGVDYFTIHAGVLKDYIKHARGRVTGIVSRGGAIMAQWCLAHNKENFLYTHFDEICEIMGSYDVAFSLGDGLRPGSIDDANDEAQFLELKTLGELVKVAWHHGCQVMVEGPGHVPMHLIKENMEKQLHLCSEAPFYTLGPLTTDIAPGYDHITSAIGAAMIGWYGTAMLCYVTPKEHLGLPNIDDVKAGVISYKIAAHAADLAKGNPSAYARDYALSQARFDFRWYDQFNLSLDPLTAKSLHDESLPGKGGKTANFCSMCGPKFCSMKLSKELVDQ.

Residues Asn192, Met221, Tyr250, His286, 306–308 (SRG), 347–350 (DGLR), and Glu386 contribute to the substrate site. Position 390 (His390) interacts with Zn(2+). Tyr413 provides a ligand contact to substrate. His454 is a Zn(2+) binding site. The [4Fe-4S] cluster site is built by Cys534, Cys537, and Cys542.

Belongs to the ThiC family. In terms of assembly, homodimer. Requires [4Fe-4S] cluster as cofactor.

It catalyses the reaction 5-amino-1-(5-phospho-beta-D-ribosyl)imidazole + S-adenosyl-L-methionine = 4-amino-2-methyl-5-(phosphooxymethyl)pyrimidine + CO + 5'-deoxyadenosine + formate + L-methionine + 3 H(+). It participates in cofactor biosynthesis; thiamine diphosphate biosynthesis. Catalyzes the synthesis of the hydroxymethylpyrimidine phosphate (HMP-P) moiety of thiamine from aminoimidazole ribotide (AIR) in a radical S-adenosyl-L-methionine (SAM)-dependent reaction. The chain is Phosphomethylpyrimidine synthase from Anaplasma marginale (strain St. Maries).